Here is a 441-residue protein sequence, read N- to C-terminus: MSASNYATERETAEGKVFTVTGGDWDVVLSGTDPINDERIVVNMGPQHPSTHGVLRLVLELEGETVRELRSVVGYLHTGIEKNMEFRNWVQGAAFVTRMDYLAPLFNETAYALAVEKLLGIEEQITERATTIRVLMMELNRISSHLVWVATTAMELGAINMMLYGFREREYVLEIFELITGLRMNHAYVRPGGVAQDVPDEAIAKIRDFLELMPKKLAEYEKMLSGQPIWLERTQNVGVLDATGCLAMGVTGPVLRSAGLAWDLRKTMPYCGYETYEFDVPTHTDGDVWGRYLVRLAEIRESLKLVEQAVDRLRPGPVMVADRKIAWPAQLAIGVDGMGNSLEHVAKIMGQSMESLIHHFKLVTEGFRVPPGQVYVGIEAPRGELGVHAVSDGGTRPYRVHYREPSFVNLQALPAMAEGGLIADVIAGGASLDPVMGGCDR.

The protein belongs to the complex I 49 kDa subunit family. NDH-1 is composed of 14 different subunits. Subunits NuoB, C, D, E, F, and G constitute the peripheral sector of the complex.

It localises to the cell membrane. The enzyme catalyses a quinone + NADH + 5 H(+)(in) = a quinol + NAD(+) + 4 H(+)(out). Its function is as follows. NDH-1 shuttles electrons from NADH, via FMN and iron-sulfur (Fe-S) centers, to quinones in the respiratory chain. The immediate electron acceptor for the enzyme in this species is believed to be a menaquinone. Couples the redox reaction to proton translocation (for every two electrons transferred, four hydrogen ions are translocated across the cytoplasmic membrane), and thus conserves the redox energy in a proton gradient. The sequence is that of NADH-quinone oxidoreductase subunit D 1 from Salinispora tropica (strain ATCC BAA-916 / DSM 44818 / JCM 13857 / NBRC 105044 / CNB-440).